The primary structure comprises 594 residues: Homeobox protein prospero homolog 1 (594 aa).

Polar residues-rich tracts occupy residues 1 to 13 (MSSG…ATAQ) and 36 to 50 (PPVN…SSNR). Disordered stretches follow at residues 1 to 20 (MSSG…NGFS), 30 to 180 (IYYS…FQPQ), and 358 to 389 (DTSS…SASA). The span at 73–101 (STSVSSNSSSSSSTSNTNSTPSSSSTSSK) shows a compositional bias: low complexity. The segment covering 105 to 117 (EGMTETETMTASI) has biased composition (polar residues). Over residues 118–135 (EQEKVIQNEESEAGKDGM) the composition is skewed to basic and acidic residues. The span at 136–162 (EEHDDGMNDFEIIDDTNDEVEESEERE) shows a compositional bias: acidic residues. Over residues 369 to 378 (KVEIKKEDAM) the composition is skewed to basic and acidic residues. Over residues 379 to 389 (SSRASPLSASA) the composition is skewed to low complexity. One can recognise a Prospero-type homeo domain in the interval 435-493 (SSMLTPMHLRKAKLMFFYTRYPNSNLLKSYFPDIRFNKNNTAQLVKWFSNFREFYYNQM). The homeo-Prospero stretch occupies residues 435–593 (SSMLTPMHLR…KEPNFLERLE (159 aa)). A Prospero domain is found at 494 to 593 (EKFARQALAE…KEPNFLERLE (100 aa)).

It belongs to the Prospero homeodomain family.

The protein resides in the nucleus. Its function is as follows. Transcription factor involved in developmental processes. Controls the transcription of genes required for excretory canal formation. The sequence is that of Homeobox protein prospero homolog 1 from Caenorhabditis elegans.